We begin with the raw amino-acid sequence, 96 residues long: Large ribosomal subunit protein uL23 (96 aa).

This sequence belongs to the universal ribosomal protein uL23 family. In terms of assembly, part of the 50S ribosomal subunit. Contacts protein L29, and trigger factor when it is bound to the ribosome.

Its function is as follows. One of the early assembly proteins it binds 23S rRNA. One of the proteins that surrounds the polypeptide exit tunnel on the outside of the ribosome. Forms the main docking site for trigger factor binding to the ribosome. The protein is Large ribosomal subunit protein uL23 of Clostridioides difficile (strain 630) (Peptoclostridium difficile).